The primary structure comprises 141 residues: Single-stranded DNA-binding protein 2 (141 aa).

In terms of domain architecture, SSB spans 1 to 104 (MLNRTVLVGR…VVADSVQFLE (104 aa)). The tract at residues 104-141 (EPKNNNQQQNNNYQQQRQTQTGNNPFDNNADSIEDLPF) is disordered. Residues 107–127 (NNNQQQNNNYQQQRQTQTGNN) show a composition bias toward low complexity.

Homotetramer.

The chain is Single-stranded DNA-binding protein 2 (ssb-p) from Staphylococcus aureus (strain Mu50 / ATCC 700699).